A 285-amino-acid chain; its full sequence is Nucleotide-binding protein Cphy_0331 (285 aa).

8 to 15 (GMSGAGKS) lines the ATP pocket. 59–62 (DIRS) is a binding site for GTP.

This sequence belongs to the RapZ-like family.

Its function is as follows. Displays ATPase and GTPase activities. The polypeptide is Nucleotide-binding protein Cphy_0331 (Lachnoclostridium phytofermentans (strain ATCC 700394 / DSM 18823 / ISDg) (Clostridium phytofermentans)).